The sequence spans 340 residues: UDP-N-acetylglucosamine--N-acetylmuramyl-(pentapeptide) pyrophosphoryl-undecaprenol N-acetylglucosamine transferase (340 aa).

UDP-N-acetyl-alpha-D-glucosamine contacts are provided by residues 15 to 17 (TGG), Asn-127, Ser-184, Ile-230, and Gln-275.

This sequence belongs to the glycosyltransferase 28 family. MurG subfamily.

It localises to the cell inner membrane. The catalysed reaction is di-trans,octa-cis-undecaprenyl diphospho-N-acetyl-alpha-D-muramoyl-L-alanyl-D-glutamyl-meso-2,6-diaminopimeloyl-D-alanyl-D-alanine + UDP-N-acetyl-alpha-D-glucosamine = di-trans,octa-cis-undecaprenyl diphospho-[N-acetyl-alpha-D-glucosaminyl-(1-&gt;4)]-N-acetyl-alpha-D-muramoyl-L-alanyl-D-glutamyl-meso-2,6-diaminopimeloyl-D-alanyl-D-alanine + UDP + H(+). The protein operates within cell wall biogenesis; peptidoglycan biosynthesis. Functionally, cell wall formation. Catalyzes the transfer of a GlcNAc subunit on undecaprenyl-pyrophosphoryl-MurNAc-pentapeptide (lipid intermediate I) to form undecaprenyl-pyrophosphoryl-MurNAc-(pentapeptide)GlcNAc (lipid intermediate II). The protein is UDP-N-acetylglucosamine--N-acetylmuramyl-(pentapeptide) pyrophosphoryl-undecaprenol N-acetylglucosamine transferase of Vesicomyosocius okutanii subsp. Calyptogena okutanii (strain HA).